The sequence spans 846 residues: Auxin response factor 2A (846 aa).

A compositionally biased stretch (polar residues) spans 1-12 (MAASEVSIQGYS). Residues 1-30 (MAASEVSIQGYSEPSDGSRPVSETGRSSSG) form a disordered region. The TF-B3 DNA-binding region spans 146–248 (FCKTLTASDT…ELRVGVRRAM (103 aa)). 2 disordered regions span residues 380-423 (PPAL…HSQA) and 660-693 (DMNIGIHPHQSLATDSDQRSEQSKGSKVDDGVAA). Composition is skewed to polar residues over residues 398–408 (ILPTSPDSSVL) and 414–423 (SRATADHSQA). Residues 675–693 (SDQRSEQSKGSKVDDGVAA) are compositionally biased toward basic and acidic residues. One can recognise a PB1 domain in the interval 720–804 (RSCTKVHKQG…RKIFIYTKEE (85 aa)). Polar residues-rich tracts occupy residues 809-824 (NPGTLNSKGEDTSSVA) and 836-846 (QLPSESGQAES). The tract at residues 809–846 (NPGTLNSKGEDTSSVAEGSDAKEVKNLQLPSESGQAES) is disordered.

This sequence belongs to the ARF family. In terms of assembly, homodimers and heterodimers. Interacts with ASR1. Expressed in root, leaf and flower. Expressed in flower buds about three days before opening including ovary, petal and sepal with the highest in stamen. Expressed in stem. Expressed in fruit. Expressed in seeds.

Its subcellular location is the nucleus. Auxin response factors (ARFs) are transcriptional factors that bind specifically to the DNA sequence 5'-TGTCTC-3' found in the auxin-responsive promoter elements (AuxREs). Could act as transcriptional activator or repressor. Involved in the control of fruit ripening process. Regulates expression of a number of ripening regulators, transcription factors, and ethylene biosynthesis and signaling components. May act as a transcriptional repressor of auxin-responsive genes. Regulates vegetative growth, lateral root formation and flower organ senescence, possibly partially by regulating gene expression of auxin and ethylene response factor (ERF) genes. Plays a negative role in axillary shoot meristem formation. This is Auxin response factor 2A from Solanum lycopersicum (Tomato).